The sequence spans 415 residues: Na(+)-translocating NADH-quinone reductase subunit B (415 aa).

Transmembrane regions (helical) follow at residues 23 to 40, 56 to 76, 129 to 149, and 164 to 184; these read WFALYEAAATLFYTPGLV, IMIMVWLAVFPAMFWGMYNAG, FLPIYATVFIVGGFWEVLFCM, and ILFALIVPPTLPLWQAALGIT. Thr236 is subject to FMN phosphoryl threonine. The next 5 helical transmembrane spans lie at 275-295, 297-317, 325-345, 358-378, and 381-401; these read VSTLALMIGAAFIVYMGIASW, IIGGVMIGMILLSTLFNVIGS, MPWHWHLVLGGFAFGMFFMAT, WAYGILIGVMCVLIRVVNPAY, and GMMLAILFANLFAPLFDHVVV.

It belongs to the NqrB/RnfD family. As to quaternary structure, composed of six subunits; NqrA, NqrB, NqrC, NqrD, NqrE and NqrF. Riboflavin serves as cofactor. It depends on FMN as a cofactor.

It localises to the cell inner membrane. The enzyme catalyses a ubiquinone + n Na(+)(in) + NADH + H(+) = a ubiquinol + n Na(+)(out) + NAD(+). NQR complex catalyzes the reduction of ubiquinone-1 to ubiquinol by two successive reactions, coupled with the transport of Na(+) ions from the cytoplasm to the periplasm. NqrA to NqrE are probably involved in the second step, the conversion of ubisemiquinone to ubiquinol. The chain is Na(+)-translocating NADH-quinone reductase subunit B from Vibrio cholerae serotype O1 (strain ATCC 39541 / Classical Ogawa 395 / O395).